The chain runs to 623 residues: MSRRLLPRAEKRRRRLEQRQQPDEQLRRAGAMVKMAAAGGGGGGGRYYGGGNEGGRAPKRLKTENAGDQHGGGGGGGSGAAGGGGGENYDDPHKTPASPVVHIRGLIDGVVEADLVEALQEFGPISYVVVMPKKRQALVEFEDVLGACNAVNYAADNQIYIAGHPAFVNYSTSQKISRPGDSDDSRSVNSVLLFTILNPIYSITTDVLYTICNPCGPVQRIVIFRKNGVQAMVEFDSVQSAQRAKASLNGADIYSGCCTLKIEYAKPTRLNVFKNDQDTWDYTNPNLSGQGDPGSNPNKRQRQPPLLGDHPAEYGEGRGFPSVDSRGSCAPARRPPRKFSPVLPLFPSHPPGGPHGGYHSHYHDEGYGPPPPHYEGRRMGPPVGGHRRGPSRYGPQYGHPPPPPPPPDYGPHADSPVLMVYGLDQSKMNCDRVFNVFCLYGNVEKVKFMKSKPGAAMVEMADGYAVDRAITHLNNNFMFGQKMNVCVSKQPAIMPGQSYGLEDGSCSYKDFSESRNNRFSTPEQAAKNRIQHPSNVLHFFNAPLEVTEENFFEICDELGVKRPTSVKVFSGKSERSSSGLLEWDSKSDALETLGFLNHYQMKNPNGPYPYTLKLCFSTAQHAS.

A compositionally biased stretch (basic residues) spans 1 to 16 (MSRRLLPRAEKRRRRL). The interval 1-97 (MSRRLLPRAE…NYDDPHKTPA (97 aa)) is disordered. Positions 17–27 (EQRQQPDEQLR) are enriched in basic and acidic residues. Residues 28–37 (RAGAMVKMAA) show a composition bias toward low complexity. Over residues 38–54 (AGGGGGGGRYYGGGNEG) the composition is skewed to gly residues. Residues Lys59 and Lys62 each participate in a glycyl lysine isopeptide (Lys-Gly) (interchain with G-Cter in SUMO2) cross-link. Residues 69–87 (QHGGGGGGGSGAAGGGGGE) show a composition bias toward gly residues. Ser98 carries the post-translational modification Phosphoserine. Positions 99 to 173 (PVVHIRGLID…HPAFVNYSTS (75 aa)) constitute an RRM 1 domain. Residue Lys133 forms a Glycyl lysine isopeptide (Lys-Gly) (interchain with G-Cter in SUMO2) linkage. Phosphoserine is present on Ser182. Positions 190 to 267 (SVLLFTILNP…CTLKIEYAKP (78 aa)) constitute an RRM 2 domain. An N6-acetyllysine modification is found at Lys266. Residues 281-298 (DYTNPNLSGQGDPGSNPN) are compositionally biased toward polar residues. The segment at 281-413 (DYTNPNLSGQ…PPPPDYGPHA (133 aa)) is disordered. Phosphoserine is present on residues Ser288 and Ser295. Lys299 participates in a covalent cross-link: Glycyl lysine isopeptide (Lys-Gly) (interchain with G-Cter in SUMO2). Residues Arg388 and Arg392 each carry the asymmetric dimethylarginine modification. The span at 398-409 (GHPPPPPPPPDY) shows a compositional bias: pro residues. The residue at position 415 (Ser415) is a Phosphoserine. RRM domains are found at residues 416 to 490 (PVLM…VSKQ) and 498 to 586 (SYGL…WDSK). Position 578 is a phosphoserine; by CaMK4 (Ser578). Residue Lys602 forms a Glycyl lysine isopeptide (Lys-Gly) (interchain with G-Cter in SUMO2) linkage.

As to quaternary structure, identified in a IGF2BP1-dependent mRNP granule complex containing untranslated mRNAs. Interacts with HNRNPLL. Interacts with APEX1; the interaction is DNA-dependent. Component of a complex with SETD2. Interacts with ELAVL1. Part of a transcription inhibitory ribonucleoprotein complex composed at least of the circular RNA circZNF827, ZNF827 and HNRNPK. Interacts with CHD8 in an RNA-dependent manner. Several isoelectric forms of the L protein are probably the results of post-translational modifications. Post-translationally, phosphorylation at Ser-578 by CaMK4 enhances interaction with a CaMK4-responsive RNA element (CaRRE1), and prevents inclusion of the stress axis-regulated exon (STREX) of the KCNMA1 potassium channel transcripts upon membrane depolarization.

Its subcellular location is the nucleus. The protein resides in the nucleoplasm. It is found in the cytoplasm. Splicing factor binding to exonic or intronic sites and acting as either an activator or repressor of exon inclusion. Exhibits a binding preference for CA-rich elements. Component of the heterogeneous nuclear ribonucleoprotein (hnRNP) complexes and associated with most nascent transcripts. Associates, together with APEX1, to the negative calcium responsive element (nCaRE) B2 of the APEX2 promoter. As part of a ribonucleoprotein complex composed at least of ZNF827, HNRNPK and the circular RNA circZNF827 that nucleates the complex on chromatin, may negatively regulate the transcription of genes involved in neuronal differentiation. Regulates alternative splicing of a core group of genes involved in neuronal differentiation, likely by mediating H3K36me3-coupled transcription elongation and co-transcriptional RNA processing via interaction with CHD8. This Rattus norvegicus (Rat) protein is Heterogeneous nuclear ribonucleoprotein L.